A 286-amino-acid polypeptide reads, in one-letter code: Deleted in azoospermia-like-B (286 aa).

The 82-residue stretch at 33–114 folds into the RRM domain; that stretch reads NTVFVGGIDI…PAIRKICTYV (82 aa). The 26-residue stretch at 155-180 folds into the DAZ domain; it reads ACPYPSSPPMAIQQIPVGCQQPGYFQ.

The protein belongs to the RRM DAZ family. In terms of assembly, interacts with the C-terminus of pabp1 and with epabp. Prior to oocyte maturation, found in a complex with epabp and pum2 proteins and spdy1 mRNA; pum2 dissociates from the complex during maturation.

Its subcellular location is the cytoplasm. Functionally, RNA-binding protein that is required for primordial germ cell (PGC) differentiation and indirectly necessary for the migration of PGCs through the endoderm. May promote meiotic cell division during spermatogenesis. Shows a preference for G- and U-rich RNAs and probably binds the 3'-UTR of target mRNAs. Stimulates the initiation of translation of mRNAs through the recruitment of poly(A)-binding proteins (PABPs). In Xenopus laevis (African clawed frog), this protein is Deleted in azoospermia-like-B (dazl-b).